The sequence spans 154 residues: Lipoprotein signal peptidase (154 aa).

The next 3 helical transmembrane spans lie at 7 to 27, 58 to 78, and 88 to 108; these read VLYL…KNYI, IFSG…AVVV, and NWLF…NFID. Catalysis depends on residues Asp-117 and Asp-133. The chain crosses the membrane as a helical span at residues 128-148; it reads IFNIADSAITVGIVLVFIYLI.

The protein belongs to the peptidase A8 family.

The protein localises to the cell membrane. The enzyme catalyses Release of signal peptides from bacterial membrane prolipoproteins. Hydrolyzes -Xaa-Yaa-Zaa-|-(S,diacylglyceryl)Cys-, in which Xaa is hydrophobic (preferably Leu), and Yaa (Ala or Ser) and Zaa (Gly or Ala) have small, neutral side chains.. It participates in protein modification; lipoprotein biosynthesis (signal peptide cleavage). Functionally, this protein specifically catalyzes the removal of signal peptides from prolipoproteins. In Lactobacillus gasseri (strain ATCC 33323 / DSM 20243 / BCRC 14619 / CIP 102991 / JCM 1131 / KCTC 3163 / NCIMB 11718 / NCTC 13722 / AM63), this protein is Lipoprotein signal peptidase.